Reading from the N-terminus, the 381-residue chain is Cytochrome b (381 aa).

A run of 4 helical transmembrane segments spans residues 34-54 (FGSL…FLAM), 78-99 (WLMR…YLHI), 114-134 (WNIG…GYVL), and 179-199 (FFAF…IHIL). Heme b contacts are provided by His84 and His98. Heme b contacts are provided by His183 and His197. Position 202 (His202) interacts with a ubiquinone. 4 helical membrane-spanning segments follow: residues 227 to 247 (YKDL…ALFM), 289 to 309 (LGGV…PLLH), 321 to 341 (LTQI…WIGG), and 348 to 368 (FIMV…FVIP).

Belongs to the cytochrome b family. In terms of assembly, the cytochrome bc1 complex contains 3 respiratory subunits (MT-CYB, CYC1 and UQCRFS1), 2 core proteins (UQCRC1 and UQCRC2) and probably 6 low-molecular weight proteins. Heme b serves as cofactor.

It localises to the mitochondrion inner membrane. In terms of biological role, component of the ubiquinol-cytochrome c reductase complex (complex III or cytochrome b-c1 complex) that is part of the mitochondrial respiratory chain. The b-c1 complex mediates electron transfer from ubiquinol to cytochrome c. Contributes to the generation of a proton gradient across the mitochondrial membrane that is then used for ATP synthesis. The protein is Cytochrome b (mt-cyb) of Scyliorhinus canicula (Small-spotted catshark).